We begin with the raw amino-acid sequence, 664 residues long: Intraflagellar transport protein 70A (664 aa).

TPR repeat units follow at residues 11–44, 45–78, 153–186, 188–220, 392–423, 424–456, and 458–491; these read DGEFTAVVYRLIRDARYAEAVQLLGGELQRSPRS, RAGLSLLGYCYYRLQEFALAAECYEQLRQLHPEL, LDGQVNLGCLLYKEGHYEAACSKFSAALQASGYR, DLSYNLALAYFSSRQYASALKHIVEIIEHGIRQ, LTKQVQEARHNKDDEAIKKAENEYDDTLEKYI, PVLMAQAKIYWNLENYPMVEKIFRKSVEFCNDH, and VWKLNVAHVLFMQENKYKEAIGFYEPIVKKHYDN. Positions 507–534 form a coiled coil; that stretch reads YIMTSQNEEAEELMRKIEKEEEQLSYDD. The stretch at 543 to 576 is one TPR 8 repeat; the sequence is CIVNLVIGTLYCAKGNYDFGISRVIKSLEPYNKK.

Belongs to the TTC30/dfy-1/fleer family.

It is found in the cell projection. Its subcellular location is the cilium. Required for polyglutamylation of axonemal tubulin. Plays a role in anterograde intraflagellar transport (IFT), the process by which cilia precursors are transported from the base of the cilium to the site of their incorporation at the tip. The polypeptide is Intraflagellar transport protein 70A (IFT70A) (Bos taurus (Bovine)).